A 206-amino-acid polypeptide reads, in one-letter code: Protein Nef (206 aa).

Residue glycine 2 is the site of N-myristoyl glycine; by host attachment. Residue serine 6 is modified to Phosphoserine; by host. The tract at residues 62–66 (EESDE) is acidic; interacts with host PACS1 and PACS2; stabilizes the interaction of NEF/MHC-I with host AP1M1; necessary for MHC-I internalization. Residues 70 to 79 (PVRPQVPLRP) are SH3-binding; interaction with Src family tyrosine kinases. The PxxP; stabilizes the interaction of NEF/MHC-I with host AP1M1; necessary for MHC-I internalization motif lies at 73–76 (PQVP). A mediates dimerization, Nef-PTE1 interaction region spans residues 109-125 (EILDLWVYNTQGIFPDW). The interval 149-181 (VDPQEVEEDTEGETNSLLHPICQHGMEDPERQV) is binding to ATP6V1H. The Dileucine internalization motif; necessary for CD4 internalization motif lies at 165 to 166 (LL). The Diacidic; necessary for CD4 internalization signature appears at 175–176 (ED).

It belongs to the lentivirus primate group Nef protein family. As to quaternary structure, monomer; cytosolic form. Homodimer; membrane bound form. Interacts with Nef associated p21-activated kinase (PAK2); this interaction activates PAK2. Associates with the Nef-MHC-I-AP1 complex; this complex is required for MHC-I internalization. Interacts (via C-terminus) with host PI3-kinase. Interacts with host PACS1; this interaction seems to be weak. Interacts with host PACS2. Interacts with host LCK and MAPK3; these interactions inhibit the kinase activity of the latter. Interacts with host ATP6V1H; this interaction may play a role in CD4 endocytosis. Associates with the CD4-Nef-AP2 complex; this complex is required for CD4 internalization. Interacts with host AP2 subunit alpha and AP2 subunit sigma2. Interacts with TCR-zeta chain; this interaction up-regulates the Fas ligand (FasL) surface expression. Interacts with host HCK, LYN, and SRC; these interactions activate the Src family kinases. Interacts with MAP3K5; this interaction inhibits the Fas and TNFR-mediated death signals. Interacts with beta-COP and PTE1. Interacts with human RACK1; this increases Nef phosphorylation by PKC. Interacts with TP53; this interaction decreases the half-life of TP53, protecting the infected cell against p53-mediated apoptosis. Post-translationally, the virion-associated Nef proteins are cleaved by the viral protease to release the soluble C-terminal core protein. Nef is probably cleaved concomitantly with viral structural proteins on maturation of virus particles. Myristoylated. In terms of processing, phosphorylated on serine residues, probably by host PKCdelta and theta.

It is found in the host cell membrane. It localises to the virion. The protein resides in the secreted. The protein localises to the host Golgi apparatus membrane. Its function is as follows. Factor of infectivity and pathogenicity, required for optimal virus replication. Alters numerous pathways of T-lymphocyte function and down-regulates immunity surface molecules in order to evade host defense and increase viral infectivity. Alters the functionality of other immunity cells, like dendritic cells, monocytes/macrophages and NK cells. In infected CD4(+) T-lymphocytes, down-regulates the surface MHC-I, mature MHC-II, CD4, CD28, CCR5 and CXCR4 molecules. Mediates internalization and degradation of host CD4 through the interaction of with the cytoplasmic tail of CD4, the recruitment of AP-2 (clathrin adapter protein complex 2), internalization through clathrin coated pits, and subsequent transport to endosomes and lysosomes for degradation. Diverts host MHC-I molecules to the trans-Golgi network-associated endosomal compartments by an endocytic pathway to finally target them for degradation. MHC-I down-regulation may involve AP-1 (clathrin adapter protein complex 1) or possibly Src family kinase-ZAP70/Syk-PI3K cascade recruited by PACS2. In consequence infected cells are masked for immune recognition by cytotoxic T-lymphocytes. Decreasing the number of immune receptors also prevents reinfection by more HIV particles (superinfection). Down-regulates host SERINC3 and SERINC5 thereby excluding these proteins from the viral particles. Virion infectivity is drastically higher when SERINC3 or SERINC5 are excluded from the viral envelope, because these host antiviral proteins impair the membrane fusion event necessary for subsequent virion penetration. In terms of biological role, bypasses host T-cell signaling by inducing a transcriptional program nearly identical to that of anti-CD3 cell activation. Interaction with TCR-zeta chain up-regulates the Fas ligand (FasL). Increasing surface FasL molecules and decreasing surface MHC-I molecules on infected CD4(+) cells send attacking cytotoxic CD8+ T-lymphocytes into apoptosis. Functionally, plays a role in optimizing the host cell environment for viral replication without causing cell death by apoptosis. Protects the infected cells from apoptosis in order to keep them alive until the next virus generation is ready to strike. Inhibits the Fas and TNFR-mediated death signals by blocking MAP3K5/ASK1. Decreases the half-life of TP53, protecting the infected cell against p53-mediated apoptosis. Inhibits the apoptotic signals regulated by the Bcl-2 family proteins through the formation of a Nef/PI3-kinase/PAK2 complex that leads to activation of PAK2 and induces phosphorylation of host BAD. Its function is as follows. Extracellular Nef protein targets CD4(+) T-lymphocytes for apoptosis by interacting with CXCR4 surface receptors. The protein is Protein Nef of Homo sapiens (Human).